The following is a 271-amino-acid chain: Cell division protein FtsQ (271 aa).

The segment at 1–37 is disordered; the sequence is MAAGPTTAEKSGASGAKRSSKGSSDGPSRPGTRNRKF. At 1-43 the chain is on the cytoplasmic side; the sequence is MAAGPTTAEKSGASGAKRSSKGSSDGPSRPGTRNRKFRMPGTR. Residues 8-24 show a composition bias toward low complexity; the sequence is AEKSGASGAKRSSKGSS. The chain crosses the membrane as a helical span at residues 44–64; the sequence is ALLITLGVLLLVAGGLWALYG. Residues 65–271 lie on the Extracellular side of the membrane; the sequence is STWFRVERVK…APTAPASSGS (207 aa). The region spanning 68-137 is the POTRA domain; that stretch reads FRVERVKTSG…HGIGLKVTER (70 aa).

This sequence belongs to the FtsQ/DivIB family. FtsQ subfamily.

Its subcellular location is the cell membrane. Its function is as follows. Essential cell division protein. This is Cell division protein FtsQ from Streptomyces venezuelae (strain ATCC 10712 / CBS 650.69 / DSM 40230 / JCM 4526 / NBRC 13096 / PD 04745).